The sequence spans 301 residues: GTPase Era (301 aa).

One can recognise an Era-type G domain in the interval 11 to 180 (RSGIITLVGR…KDVFFENCLN (170 aa)). The G1 stretch occupies residues 19 to 26 (GRPNVGKS). 19–26 (GRPNVGKS) contacts GTP. Residues 45-49 (QTTRR) are G2. The tract at residues 66–69 (DTPG) is G3. Residues 66 to 70 (DTPGI) and 129 to 132 (TKID) contribute to the GTP site. The G4 stretch occupies residues 129-132 (TKID). The interval 159–161 (VSA) is G5. The KH type-2 domain occupies 210–286 (LEQEIPHSLL…YLRLIVKVVK (77 aa)).

The protein belongs to the TRAFAC class TrmE-Era-EngA-EngB-Septin-like GTPase superfamily. Era GTPase family. As to quaternary structure, monomer.

Its subcellular location is the cytoplasm. The protein resides in the cell membrane. In terms of biological role, an essential GTPase that binds both GDP and GTP, with rapid nucleotide exchange. Plays a role in 16S rRNA processing and 30S ribosomal subunit biogenesis and possibly also in cell cycle regulation and energy metabolism. This chain is GTPase Era, found in Tropheryma whipplei (strain TW08/27) (Whipple's bacillus).